Here is a 367-residue protein sequence, read N- to C-terminus: FAD synthetase 2, chloroplastic (367 aa).

The transit peptide at 1–57 (MLCGGSRVLQHLSDHNHHNSIGLGLGFCGAKIVQLSSFFLRPSQAMAKSHHFSRKLR) directs the protein to the chloroplast.

It depends on Mg(2+) as a cofactor.

It localises to the plastid. The protein localises to the chloroplast. The catalysed reaction is FMN + ATP + H(+) = FAD + diphosphate. Its pathway is cofactor biosynthesis; FAD biosynthesis; FAD from FMN: step 1/1. In terms of biological role, catalyzes the adenylation of flavin mononucleotide (FMN) to form flavin adenine dinucleotide (FAD) coenzyme. This Arabidopsis thaliana (Mouse-ear cress) protein is FAD synthetase 2, chloroplastic.